We begin with the raw amino-acid sequence, 739 residues long: Phosphoribosylformylglycinamidine synthase subunit PurL (739 aa).

Residue histidine 53 is part of the active site. Positions 56 and 95 each coordinate ATP. Glutamate 97 contributes to the Mg(2+) binding site. Residues serine 98–histidine 101 and arginine 120 contribute to the substrate site. The Proton acceptor role is filled by histidine 99. Aspartate 121 is a binding site for Mg(2+). A substrate-binding site is contributed by glutamine 244. Aspartate 274 provides a ligand contact to Mg(2+). Residue glutamate 318–glutamine 320 participates in substrate binding. Residues aspartate 501 and glycine 538 each contribute to the ATP site. Asparagine 539 is a binding site for Mg(2+). A substrate-binding site is contributed by serine 541.

It belongs to the FGAMS family. Monomer. Part of the FGAM synthase complex composed of 1 PurL, 1 PurQ and 2 PurS subunits.

The protein resides in the cytoplasm. The catalysed reaction is N(2)-formyl-N(1)-(5-phospho-beta-D-ribosyl)glycinamide + L-glutamine + ATP + H2O = 2-formamido-N(1)-(5-O-phospho-beta-D-ribosyl)acetamidine + L-glutamate + ADP + phosphate + H(+). Its pathway is purine metabolism; IMP biosynthesis via de novo pathway; 5-amino-1-(5-phospho-D-ribosyl)imidazole from N(2)-formyl-N(1)-(5-phospho-D-ribosyl)glycinamide: step 1/2. Its function is as follows. Part of the phosphoribosylformylglycinamidine synthase complex involved in the purines biosynthetic pathway. Catalyzes the ATP-dependent conversion of formylglycinamide ribonucleotide (FGAR) and glutamine to yield formylglycinamidine ribonucleotide (FGAM) and glutamate. The FGAM synthase complex is composed of three subunits. PurQ produces an ammonia molecule by converting glutamine to glutamate. PurL transfers the ammonia molecule to FGAR to form FGAM in an ATP-dependent manner. PurS interacts with PurQ and PurL and is thought to assist in the transfer of the ammonia molecule from PurQ to PurL. This chain is Phosphoribosylformylglycinamidine synthase subunit PurL, found in Listeria monocytogenes serotype 4a (strain HCC23).